The primary structure comprises 57 residues: Small ribosomal subunit protein eS31 (57 aa).

Residues Cys29, Cys32, Cys47, and Cys50 each contribute to the Zn(2+) site. Residues 29–50 form a C4-type zinc finger; the sequence is CPRCGPGVFMANHKDRWSCGRC.

It belongs to the eukaryotic ribosomal protein eS31 family. Part of the 30S ribosomal subunit. Zn(2+) serves as cofactor.

This Thermococcus kodakarensis (strain ATCC BAA-918 / JCM 12380 / KOD1) (Pyrococcus kodakaraensis (strain KOD1)) protein is Small ribosomal subunit protein eS31.